The primary structure comprises 621 residues: Pentatricopeptide repeat-containing protein At1g12620 (621 aa).

PPR repeat units lie at residues 36–70 (GKVSYRERLRSGIVDIKEDDAVDLFQEMTRSRPRP), 71–105 (RLIDFSRLFSVVARTKQYDLVLDLCKQMELKGIAH), 106–140 (NLYTLSIMINCCCRCRKLSLAFSAMGKIIKLGYEP), 141–175 (DTVTFSTLINGLCLEGRVSEALELVDRMVEMGHKP), 176–210 (TLITLNALVNGLCLNGKVSDAVLLIDRMVETGFQP), 211–245 (NEVTYGPVLKVMCKSGQTALAMELLRKMEERKIKL), 246–280 (DAVKYSIIIDGLCKDGSLDNAFNLFNEMEIKGFKA), 281–315 (DIIIYTTLIRGFCYAGRWDDGAKLLRDMIKRKITP), 316–350 (DVVAFSALIDCFVKEGKLREAEELHKEMIQRGISP), 351–385 (DTVTYTSLIDGFCKENQLDKANHMLDLMVSKGCGP), 386–420 (NIRTFNILINGYCKANLIDDGLELFRKMSLRGVVA), 421–455 (DTVTYNTLIQGFCELGKLEVAKELFQEMVSRRVRP), 456–490 (DIVSYKILLDGLCDNGEPEKALEIFEKIEKSKMEL), 491–525 (DIGIYNIIIHGMCNASKVDDAWDLFCSLPLKGVKP), 526–560 (DVKTYNIMIGGLCKKGSLSEADLLFRKMEEDGHSP), and 561–595 (NGCTYNILIRAHLGEGDATKSAKLIEEIKRCGFSV).

Belongs to the PPR family. P subfamily.

In Arabidopsis thaliana (Mouse-ear cress), this protein is Pentatricopeptide repeat-containing protein At1g12620.